Reading from the N-terminus, the 386-residue chain is F420 non-reducing hydrogenase I small subunit (386 aa).

A signal peptide (tat-type signal) is located at residues 1–51 (MVEMSTGTTNLVRTLDSMDFLKMDRRTFMKAVSALGATAFLGTYQTEIVNA). Residues C67, C70, C178, C227, H273, C276, C296, and C302 each contribute to the [4Fe-4S] cluster site. Residues C311, C330, and C333 each coordinate [3Fe-4S] cluster.

This sequence belongs to the [NiFe]/[NiFeSe] hydrogenase small subunit family. Composed of a large subunit (VhoA), a small subunit (VhoG) and a cytochrome subunit (VhoC). [4Fe-4S] cluster serves as cofactor. It depends on [3Fe-4S] cluster as a cofactor. In terms of processing, predicted to be exported by the Tat system. The position of the signal peptide cleavage has not been experimentally proven.

It localises to the cell membrane. The enzyme catalyses methanophenazine + H2 = dihydromethanophenazine. In terms of biological role, part of the F420 non-reducing hydrogenase I complex that catalyzes the reduction of methanophenazine to dihydromethanophenazine. The chain is F420 non-reducing hydrogenase I small subunit from Methanosarcina mazei (strain ATCC BAA-159 / DSM 3647 / Goe1 / Go1 / JCM 11833 / OCM 88) (Methanosarcina frisia).